A 67-amino-acid chain; its full sequence is Large ribosomal subunit protein eL38 (67 aa).

It belongs to the eukaryotic ribosomal protein eL38 family.

In Aeropyrum pernix (strain ATCC 700893 / DSM 11879 / JCM 9820 / NBRC 100138 / K1), this protein is Large ribosomal subunit protein eL38 (rpl38e).